The following is a 328-amino-acid chain: DNA-directed RNA polymerase subunit alpha (328 aa).

Residues 1-231 (MIYQMQMPAK…EHVAFFADFS (231 aa)) form an alpha N-terminal domain (alpha-NTD) region. The tract at residues 252 to 328 (MRKLLNTKIE…MDITKYQMKG (77 aa)) is alpha C-terminal domain (alpha-CTD).

This sequence belongs to the RNA polymerase alpha chain family. As to quaternary structure, homodimer. The RNAP catalytic core consists of 2 alpha, 1 beta, 1 beta' and 1 omega subunit. When a sigma factor is associated with the core the holoenzyme is formed, which can initiate transcription.

The enzyme catalyses RNA(n) + a ribonucleoside 5'-triphosphate = RNA(n+1) + diphosphate. DNA-dependent RNA polymerase catalyzes the transcription of DNA into RNA using the four ribonucleoside triphosphates as substrates. This chain is DNA-directed RNA polymerase subunit alpha, found in Chlorobium phaeovibrioides (strain DSM 265 / 1930) (Prosthecochloris vibrioformis (strain DSM 265)).